Reading from the N-terminus, the 337-residue chain is Ornithine carbamoyltransferase (337 aa).

Residues 56–59 (STRT), glutamine 83, arginine 107, and 134–137 (HPTQ) contribute to the carbamoyl phosphate site. L-ornithine is bound by residues asparagine 168, aspartate 232, and 236-237 (SM). Residues 274–275 (CL) and arginine 320 each bind carbamoyl phosphate.

The protein belongs to the aspartate/ornithine carbamoyltransferase superfamily. OTCase family.

The protein localises to the cytoplasm. The enzyme catalyses carbamoyl phosphate + L-ornithine = L-citrulline + phosphate + H(+). It participates in amino-acid biosynthesis; L-arginine biosynthesis; L-arginine from L-ornithine and carbamoyl phosphate: step 1/3. Reversibly catalyzes the transfer of the carbamoyl group from carbamoyl phosphate (CP) to the N(epsilon) atom of ornithine (ORN) to produce L-citrulline. In Shigella flexneri serotype 5b (strain 8401), this protein is Ornithine carbamoyltransferase.